Reading from the N-terminus, the 597-residue chain is Plasmepsin V (597 aa).

Residues M1–S551 lie on the Lumenal side of the membrane. Residues C33 to A88 are a coiled coil. Positions E58–N75 are enriched in basic and acidic residues. A disordered region spans residues E58 to D83. Residues Y107–I521 form the Peptidase A1 domain. Residue D125 is part of the active site. 7 disulfides stabilise this stretch: C135/C218, C138/C141, C162/C173, C167/C178, C266/C525, C396/C441, and C450/C486. Residues K289–D298 are compositionally biased toward basic and acidic residues. Positions K289–N323 are disordered. Over residues N299 to L311 the composition is skewed to low complexity. Residue D372 is part of the active site. The helical transmembrane segment at Y552 to L572 threads the bilayer. At Y573–T597 the chain is on the cytoplasmic side.

It belongs to the peptidase A1 family. In terms of assembly, component of a complex composed of SPC25 and PMV; the interaction is mediated via the transmembrane domains. The complex interacts with the SEC61 channel-forming translocon complex and is involved in the recognition and import of PEXEL motif-containing proteins into the ER for subsequent export. Post-translationally, it is not clear if the zymogen has a cleavable propeptide. In vitro, appears to be cleaved between Asn-87 and Ala-88. Cleavage of the putative propeptide is dispensable for catalytic activity.

Its subcellular location is the endoplasmic reticulum membrane. In terms of biological role, during the asexual blood stage, plays an essential role in the export of several proteins into the host erythrocytes by cleaving the pentameric localization motif RxLxE/Q/D (termed Plasmodium export element (PEXEL)) located downstream of the N-terminal secretory signal sequence. Specifically, cleaves after the leucine residue in the RxLxE/Q/D (or RxLxxE) motif of exported proteins including RESA, EMP2, EMP3, KAHRP, RIF/Rifin and STEVOR. Also, by regulating protein export, plays an essential role in gametocyte development and thus parasite transmission to the mosquito vector. This chain is Plasmepsin V, found in Plasmodium falciparum (isolate HB3).